A 92-amino-acid polypeptide reads, in one-letter code: Small ribosomal subunit protein uS19c (92 aa).

Belongs to the universal ribosomal protein uS19 family.

It localises to the plastid. The protein resides in the chloroplast. Functionally, protein S19 forms a complex with S13 that binds strongly to the 16S ribosomal RNA. The chain is Small ribosomal subunit protein uS19c from Nandina domestica (Heavenly bamboo).